The sequence spans 141 residues: Hemoglobin subunit alpha (141 aa).

The Globin domain maps to 1–141 (VLSPADKANI…VSTVLTSKYR (141 aa)). Position 3 is a phosphoserine (S3). 2 positions are modified to N6-succinyllysine: K7 and K11. K16 carries the N6-acetyllysine; alternate modification. K16 carries the N6-succinyllysine; alternate modification. Y24 is modified (phosphotyrosine). At S35 the chain carries Phosphoserine. At K40 the chain carries N6-succinyllysine. At S49 the chain carries Phosphoserine. Residue H58 coordinates O2. H87 provides a ligand contact to heme b. At S102 the chain carries Phosphoserine. T108 carries the phosphothreonine modification. A phosphoserine mark is found at S124 and S131. Phosphothreonine occurs at positions 134 and 137. S138 is modified (phosphoserine).

Belongs to the globin family. Heterotetramer of two alpha chains and two beta chains. Red blood cells.

Its function is as follows. Involved in oxygen transport from the lung to the various peripheral tissues. Functionally, hemopressin acts as an antagonist peptide of the cannabinoid receptor CNR1. Hemopressin-binding efficiently blocks cannabinoid receptor CNR1 and subsequent signaling. The chain is Hemoglobin subunit alpha (HBA) from Meles meles (Eurasian badger).